We begin with the raw amino-acid sequence, 951 residues long: MAAAAAAAAALGVRLRDCCSRGAVLLLFFSLSPRPPAAAAWLLGLRPEDTAGGRVSLEGGTLRAAEGTSFLLRVYFQPGPPVPAAPVPAPSLAPGENGTGDWAPRLVFIEEPPGAGGAAPSAVPTRPPGPQRCREQSDWASDVEVLGPLRPGGVAGSALVQVRVRELRKGEAERGGAGGGGKLFSLCAWDGRAWHHHGAAGGFLLRVRPRLYGPGGDLLPPAWLRALGALLLLALSALFSGLRLSLLSLDPVELRVLRNSGSAAEQEQARRVQAVRGRGTHLLCTLLLGQAGANAALAGWLYASLPPGVGDPGEDSGEAGVHFPWLPALVCTGAVFLGAEICPYSVCSRHGLAIASHSVCLTRLLMAAAFPVCYPLGRLLDWALRQEISTFYTREKLLETLRAADPYSDLVKEELNIIQGALELRTKVVEEVLTPLGDCFMLRSDAVLDFATVSEILRSGYTRIPVYEGDQRHNIVDILFVKDLAFVDPDDCTPLLTVTRFYNRPLHCVFNDTRLDTVLEEFKKGKSHLAIVQRVNNEGEGDPFYEVMGIVTLEDIIEEIIKSEILDETDLYTDNRKKQRVPHRERRRHDFSLFKLSDSEIRVKISPQLLLATHRFMATEVEPFKSLYLSEKILLRLLKHPNVIQELKFDERNKKAPEHYLYQRNRPVDYFVLLLQGKVEVEVGKEGLRFENGAFTYYGVPAIMTSACSDNDVRKVGSLAGSSVFLNRSPSRCSGLNRSESPNRERSDFGGSNTQLYSSSNNLYTPDYSVHILSDVQFVKITRQQYQNALTACHMDSSPQSPDMEAFTDGDSTKAPTTRGTPQTPKDDPVLTLLSNRTSLPCSRSDGLRSPGEVVYLRMEEMAFPQEEMPNFEEHRSQQVSLSPVAVPTTAASDPECCNIHLDPEASPCSSDSEENMGKKLLRTLSGRKRKKSADGERASEENSNLTPLIT.

A helical transmembrane segment spans residues 23 to 43 (AVLLLFFSLSPRPPAAAAWLL). Residues 114-138 (GAGGAAPSAVPTRPPGPQRCREQSD) form a disordered region. In terms of domain architecture, CNNM transmembrane spans 218–414 (LLPPAWLRAL…DPYSDLVKEE (197 aa)). 3 helical membrane passes run 222–242 (AWLRALGALLLLALSALFSGL), 282–302 (LLCTLLLGQAGANAALAGWLY), and 319–339 (AGVHFPWLPALVCTGAVFLGA). 2 CBS domains span residues 433–495 (LTPL…CTPL) and 502–568 (YNRP…ILDE). Composition is skewed to polar residues over residues 731-740 (SRCSGLNRSE) and 814-824 (KAPTTRGTPQT). Disordered stretches follow at residues 731 to 754 (SRCSGLNRSESPNRERSDFGGSNT) and 795 to 830 (MDSSPQSPDMEAFTDGDSTKAPTTRGTPQTPKDDPV). A phosphothreonine mark is found at Thr-821 and Thr-824. Ser-850 carries the post-translational modification Phosphoserine. The disordered stretch occupies residues 903–951 (DPEASPCSSDSEENMGKKLLRTLSGRKRKKSADGERASEENSNLTPLIT). Basic residues predominate over residues 920–932 (KLLRTLSGRKRKK). A compositionally biased stretch (polar residues) spans 942-951 (ENSNLTPLIT).

The protein belongs to the ACDP family. Predominantly expressed in brain and testis, and, at lower levels, in kidney. In the brain, expressed in hippocampal neurons (at protein level).

It is found in the cell membrane. Functionally, probable metal transporter. The sequence is that of Metal transporter CNNM1 (Cnnm1) from Mus musculus (Mouse).